A 447-amino-acid chain; its full sequence is Omega-6 fatty acid desaturase, chloroplastic (447 aa).

A chloroplast-targeting transit peptide spans 1-65; the sequence is MESAITISNH…TRRKSTLVQA (65 aa). The residue at position 66 (Val-66) is an N-acetylvaline. Residues 171–175 carry the Histidine box-1 motif; the sequence is HDCAH. A Histidine box-2 motif is present at residues 207 to 211; it reads HDQHH. Positions 367 to 371 match the Histidine box-3 motif; the sequence is HIPHH.

The protein belongs to the fatty acid desaturase type 1 family.

The protein resides in the plastid. Its subcellular location is the chloroplast membrane. The catalysed reaction is a (9Z)-octadecenoyl-containing glycerolipid + 2 reduced [2Fe-2S]-[ferredoxin] + O2 + 2 H(+) = a (9Z,12Z)-octadecadienoyl-containing glycerolipid + 2 oxidized [2Fe-2S]-[ferredoxin] + 2 H2O. Its pathway is lipid metabolism; polyunsaturated fatty acid biosynthesis. Functionally, chloroplast omega-6 fatty acid desaturase introduces the second double bond in the biosynthesis of 16:3 and 18:3 fatty acids, important constituents of plant membranes. It is thought to use ferredoxin as an electron donor and to act on fatty acids esterified to galactolipids, sulfolipids and phosphatidylglycerol. The sequence is that of Omega-6 fatty acid desaturase, chloroplastic from Spinacia oleracea (Spinach).